The following is a 901-amino-acid chain: Core protein VP3 (901 aa).

This sequence belongs to the orbivirus VP3 family.

Its subcellular location is the virion. Its function is as follows. The VP3 protein is one of the five proteins (with VP1, VP4, VP6 and VP7) which form the inner capsid of the virus. This is Core protein VP3 (Segment-3) from Bluetongue virus 10 (isolate USA) (BTV 10).